A 384-amino-acid chain; its full sequence is Beta-ureidopropionase (384 aa).

The CN hydrolase domain occupies 72 to 344; it reads VHVGLVQNRI…DGLLVAKLDL (273 aa). Catalysis depends on glutamate 119, which acts as the Proton acceptor. Lysine 196 (proton donor) is an active-site residue. Cysteine 233 acts as the Nucleophile in catalysis. At serine 378 the chain carries Phosphoserine.

Belongs to the carbon-nitrogen hydrolase superfamily. BUP family. In terms of assembly, homodimer, homotetramer, homooctamer; can also form higher homooligomers. As to expression, detected in liver (at protein level).

Its subcellular location is the cytoplasm. It catalyses the reaction 3-(carbamoylamino)propanoate + H2O + 2 H(+) = beta-alanine + NH4(+) + CO2. It carries out the reaction 3-(carbamoylamino)-2-methylpropanoate + H2O + 2 H(+) = (R)-3-amino-2-methylpropanoate + NH4(+) + CO2. It functions in the pathway amino-acid biosynthesis; beta-alanine biosynthesis. Its activity is regulated as follows. Strongly inhibited by 50 mM Zn(2+). Not inhibited by EDTA. Competitively inhibited by beta-alanine, 5-aminolevulinic acid (ALA), beta-aminoisobutyrate and 4-ureidobutyrate. Its function is as follows. Catalyzes a late step in pyrimidine degradation. Converts N-carbamoyl-beta-alanine (3-ureidopropanoate) into beta-alanine, ammonia and carbon dioxide. Likewise, converts N-carbamoyl-beta-aminoisobutyrate (3-ureidoisobutyrate) into beta-aminoisobutyrate, ammonia and carbon dioxide. This Homo sapiens (Human) protein is Beta-ureidopropionase (UPB1).